A 522-amino-acid chain; its full sequence is L-tyrosine/L-DOPA decarboxylase 2 (522 aa).

A run of 2 repeats spans residues 75-132 (KDVH…TELE) and 135-186 (VMDW…GREH). A 2 X approximate tandem repeats region spans residues 75–186 (KDVHDDIVPG…RILDRIGREH (112 aa)). Pyridoxal 5'-phosphate is bound by residues T163, C164, T258, and N312. The residue at position 315 (K315) is an N6-(pyridoxal phosphate)lysine.

It belongs to the group II decarboxylase family. Pyridoxal 5'-phosphate serves as cofactor. As to expression, strongly expressed in all tissues, particularly in thick roots.

The catalysed reaction is L-tyrosine + H(+) = tyramine + CO2. The enzyme catalyses L-dopa + H(+) = dopamine + CO2. The protein operates within aromatic compound metabolism. It functions in the pathway alkaloid biosynthesis. Aromatic amino acid decarboxylase participating in the biosynthesis of natural products derived from phenylethylamine, including mescaline, a natural hallucinogen potentially used in psychotherapeutic treatments. Catalyzes the decarboxylation of L-tyrosine and L-DOPA. This chain is L-tyrosine/L-DOPA decarboxylase 2, found in Lophophora williamsii (Peyote).